Here is a 493-residue protein sequence, read N- to C-terminus: MASGILVNVKEEVTCPICLELLTQPLSLDCGHSFCQACLTANHKTSMPDGERSCPVCRISYQHKNIRPNRHVANIVEKLREVKLSPEEGQKVDHCARHGEKLLLFCREDRKVICWLCERSQEHRGHHTFLMEEVAQEYQVKLQAALQMLRQKQQEAEQLEADIREEKASWKTQIQYDKTNILADFEQLRHILDWVESNELQNLEKEEKDVLRRLMKSEIEMVQQTQSVRELISDLEHRLQGSVMELLQGVDGVIKRMKNMTLKKPETFPKNKRRVFRAADLQVTLEVLRELRDVRRYWVDVTVAPNNISYAVISEDMRQVSSPEPQIIYEAQGTISQTFVNFNYCTGILGSQSITSGKHYWEVDVSKKSAWILGVCAGFQPDAMYNIEQNENYQPKYGYWVIGLEEGVKCNAFQDGSSHTPSAPFIVPLSVKICPDRVGVFLDYEACTVSFFNITNHGFLIYKFSHCSFSQPVFPYLNPRKCTVPMTLCSPSS.

A2 is modified (N-acetylalanine). The RING-type zinc-finger motif lies at 15-58 (CPICLELLTQPLSLDCGHSFCQACLTANHKTSMPDGERSCPVCR). S85 is modified (phosphoserine). The B box-type zinc finger occupies 90 to 131 (QKVDHCARHGEKLLLFCREDRKVICWLCERSQEHRGHHTFLM). 4 residues coordinate Zn(2+): C95, H98, C117, and H123. Positions 130–240 (LMEEVAQEYQ…LISDLEHRLQ (111 aa)) form a coiled coil. The segment at 185–198 (FEQLRHILDWVESN) is required for interaction with GABARAP and for autophagy. Residues 281–493 (LQVTLEVLRE…VPMTLCSPSS (213 aa)) form the B30.2/SPRY domain.

The protein belongs to the TRIM/RBCC family. As to quaternary structure, can form homodimers and homotrimers. In addition to lower-order dimerization, also exhibits a higher-order multimerization and both low- and high-order multimerizations are essential for its restriction activity. Interacts with BTBD1 and BTBD2. Interacts with PSMC4, PSMC5, PSMD7 and HSPA8/HSC70. Interacts (via B30.2/SPRY domain) with HSPA1A/B. Interacts with PSMC2, MAP3K7/TAK1, TAB2 and TAB3. Interacts with SQSTM1. Interacts with TRIM6 and TRIM34. Interacts with ULK1 (phosphorylated form), GABARAP, GABARAPL1, GABARAPL2, MAP1LC3A, MAP1LC3C and BECN1. Degraded in a proteasome-independent fashion in the absence of viral infection but in a proteasome-dependent fashion following exposure to restriction sensitive virus. In terms of processing, autoubiquitinated in a RING finger- and UBE2D2-dependent manner. Monoubiquitinated by TRIM21. Deubiquitinated by Yersinia YopJ. Ubiquitination may not lead to proteasomal degradation.

The protein resides in the cytoplasm. It localises to the nucleus. The catalysed reaction is S-ubiquitinyl-[E2 ubiquitin-conjugating enzyme]-L-cysteine + [acceptor protein]-L-lysine = [E2 ubiquitin-conjugating enzyme]-L-cysteine + N(6)-ubiquitinyl-[acceptor protein]-L-lysine.. It functions in the pathway protein modification; protein ubiquitination. Capsid-specific restriction factor that prevents infection from non-host-adapted retroviruses. Blocks viral replication early in the life cycle, after viral entry but before reverse transcription. In addition to acting as a capsid-specific restriction factor, also acts as a pattern recognition receptor that activates innate immune signaling in response to the retroviral capsid lattice. Binding to the viral capsid triggers its E3 ubiquitin ligase activity, and in concert with the heterodimeric ubiquitin conjugating enzyme complex UBE2V1-UBE2N (also known as UBC13-UEV1A complex) generates 'Lys-63'-linked polyubiquitin chains, which in turn are catalysts in the autophosphorylation of the MAP3K7/TAK1 complex (includes TAK1, TAB2, and TAB3). Activation of the MAP3K7/TAK1 complex by autophosphorylation results in the induction and expression of NF-kappa-B and MAPK-responsive inflammatory genes, thereby leading to an innate immune response in the infected cell. Plays a role in regulating autophagy through activation of autophagy regulator BECN1 by causing its dissociation from its inhibitors BCL2 and TAB2. The sequence is that of Tripartite motif-containing protein 5 (TRIM5) from Hylobates lar (Lar gibbon).